A 200-amino-acid chain; its full sequence is High mobility group protein 1 homolog (200 aa).

2 consecutive DNA-binding regions (HMG box) follow at residues 11 to 81 (PRGR…QSYK) and 100 to 168 (PKRN…AEYK). Positions 64–86 (EKSMRDKVRYDREMQSYKPPKGE) are enriched in basic and acidic residues. 2 disordered regions span residues 64–103 (EKSM…PKRN) and 169–200 (AKAK…DDSD). The segment covering 190 to 200 (SSDDSSSDDSD) has biased composition (acidic residues).

This sequence belongs to the HMGB family.

The protein resides in the nucleus. It localises to the chromosome. Functionally, binds preferentially single-stranded DNA and unwinds double-stranded DNA. In Strongylocentrotus purpuratus (Purple sea urchin), this protein is High mobility group protein 1 homolog (HMG1).